The sequence spans 257 residues: Protein KlaA (257 aa).

Its function is as follows. Belongs to the kla operon, which is associated with cryptic tellurite resistance, and IncW plasmid fertility inhibition. This is Protein KlaA (klaA) from Escherichia coli.